We begin with the raw amino-acid sequence, 82 residues long: KappaPI-actitoxin-Avd3e (82 aa).

The first 16 residues, Met-1–Gly-16, serve as a signal peptide directing secretion. One can recognise a BPTI/Kunitz inhibitor domain in the interval Cys-21–Cys-71. Disulfide bonds link Cys-21/Cys-71, Cys-30/Cys-54, and Cys-46/Cys-67. Positions Arg-76–Asn-82 are excised as a propeptide.

It belongs to the venom Kunitz-type family. Sea anemone type 2 potassium channel toxin subfamily.

The protein localises to the secreted. It is found in the nematocyst. Serine protease inhibitor that inhibits both tissue and plasma kallikreins. Has hemolytic activity. Inhibits voltage-gated potassium channels (Kv). The sequence is that of KappaPI-actitoxin-Avd3e from Anemonia viridis (Snakelocks anemone).